We begin with the raw amino-acid sequence, 623 residues long: MFLEEYDVIVVGAGHAGSEAAAAAANLGSKTLLVTMSLQNIAQMSCNPAMGGIAKGQIVREIDALGGYSGIVSDRTAIQFKMLNKSKGPAMWSPRVQSDRMRFAEEWRMMLEGTPNLDFYQEMVKGLIIENGKIKGIRTSLGVEIRSKSVVLTNGTFLNGLIHIGEKQFGGGRAGESAATGITEDLVKAGFEAGRMKTGTPPRVDGRSLDYSKMNEEKGDAKPDKFSYSDLTKPLTQQRSCYMTYTSLNVHDILREGFDRSPMFNGRIKSLGPRYCPSIEDKINRFADKERHQLFVEPEGWNTCEVYVNGFSTSLPEDIQFKALRSVAGFENVKFFRPGYAIEYDYFPPTQLKHTLETKLVEGLYFAGQINGTTGYEEAASQGLMAGINAHLKVHEKAPLILKRDEAYIGVLIDDLITKGTEEPYRMFTSRAEYRTLLRQDNADFRLTPMSFEIGLASEDRMRRMEHKLNESEKMVAFFKETSVTVAETNPILIEKESAPISQGDKMFKVFSRPQIELEDMLKFEKVDSYIKENNLDEEIVEQAVIQVKYSGYIEKERNNADKLNRLEEVKIPENFDYNKIKSMSIEAKQKLSKIRPVTISQASRISGVSPSDISVLLIYMGR.

An FAD-binding site is contributed by glycine 12 to glycine 17. Glycine 272 to phenylalanine 286 contacts NAD(+).

It belongs to the MnmG family. Homodimer. Heterotetramer of two MnmE and two MnmG subunits. Requires FAD as cofactor.

The protein resides in the cytoplasm. Its function is as follows. NAD-binding protein involved in the addition of a carboxymethylaminomethyl (cmnm) group at the wobble position (U34) of certain tRNAs, forming tRNA-cmnm(5)s(2)U34. This Flavobacterium johnsoniae (strain ATCC 17061 / DSM 2064 / JCM 8514 / BCRC 14874 / CCUG 350202 / NBRC 14942 / NCIMB 11054 / UW101) (Cytophaga johnsonae) protein is tRNA uridine 5-carboxymethylaminomethyl modification enzyme MnmG.